We begin with the raw amino-acid sequence, 201 residues long: Orotate phosphoribosyltransferase (201 aa).

113 to 121 (EDIITTGKS) is a 5-phospho-alpha-D-ribose 1-diphosphate binding site. Positions 117 and 145 each coordinate orotate.

The protein belongs to the purine/pyrimidine phosphoribosyltransferase family. PyrE subfamily. Homodimer. Mg(2+) is required as a cofactor.

The enzyme catalyses orotidine 5'-phosphate + diphosphate = orotate + 5-phospho-alpha-D-ribose 1-diphosphate. It participates in pyrimidine metabolism; UMP biosynthesis via de novo pathway; UMP from orotate: step 1/2. Functionally, catalyzes the transfer of a ribosyl phosphate group from 5-phosphoribose 1-diphosphate to orotate, leading to the formation of orotidine monophosphate (OMP). In Helicobacter acinonychis (strain Sheeba), this protein is Orotate phosphoribosyltransferase.